The sequence spans 395 residues: Protein phosphatase PP2A regulatory subunit A (395 aa).

HEAT repeat units lie at residues 44–81, 83–120, 122–159, 161–198, 200–237, 239–276, 279–316, and 318–355; these read DCLA…AVGP, STKT…ILSP, LAIQ…VLGK, ATIE…VIGI, LLSQ…QLGV, FFDD…EEFG, WAMQ…VLGS, and ITST…IVDE.

It belongs to the phosphatase 2A regulatory subunit A family. As to quaternary structure, PP2A exists in several trimeric forms, all of which consist of a core composed of a catalytic subunit associated with a 65 kDa regulatory subunit (PR65) (subunit A). The core complex associates with a third, variable subunit (subunit B), which confers distinct properties to the holoenzyme.

Functionally, the PR65 subunit of protein phosphatase 2A serves as a scaffolding molecule to coordinate the assembly of the catalytic subunit and a variable regulatory B subunit. The polypeptide is Protein phosphatase PP2A regulatory subunit A (Pisum sativum (Garden pea)).